The sequence spans 302 residues: Intermediate capsid protein VP8 (302 aa).

It is found in the virion. In terms of biological role, self assembles to form an icosahedral capsid with a T=13 symmetry, which consists of 230 trimers, with channels at each of its five-fold vertices. The chain is Intermediate capsid protein VP8 (Segment-8) from Banna virus (BAV).